The primary structure comprises 88 residues: Exodeoxyribonuclease 7 small subunit (88 aa).

The interval 69–88 (DPMHPDDGEPFDPSLVSTSQ) is disordered.

Belongs to the XseB family. Heterooligomer composed of large and small subunits.

It localises to the cytoplasm. It catalyses the reaction Exonucleolytic cleavage in either 5'- to 3'- or 3'- to 5'-direction to yield nucleoside 5'-phosphates.. In terms of biological role, bidirectionally degrades single-stranded DNA into large acid-insoluble oligonucleotides, which are then degraded further into small acid-soluble oligonucleotides. The sequence is that of Exodeoxyribonuclease 7 small subunit from Xylella fastidiosa (strain M23).